The sequence spans 108 residues: Thiosulfate sulfurtransferase GlpE (108 aa).

Positions 17–105 (QEKEAVLVDI…WQRQFPAEVA (89 aa)) constitute a Rhodanese domain. The active-site Cysteine persulfide intermediate is Cys-65.

The protein belongs to the GlpE family.

The protein resides in the cytoplasm. It catalyses the reaction thiosulfate + hydrogen cyanide = thiocyanate + sulfite + 2 H(+). It carries out the reaction thiosulfate + [thioredoxin]-dithiol = [thioredoxin]-disulfide + hydrogen sulfide + sulfite + 2 H(+). Its function is as follows. Transferase that catalyzes the transfer of sulfur from thiosulfate to thiophilic acceptors such as cyanide or dithiols. May function in a CysM-independent thiosulfate assimilation pathway by catalyzing the conversion of thiosulfate to sulfite, which can then be used for L-cysteine biosynthesis. This Escherichia coli O139:H28 (strain E24377A / ETEC) protein is Thiosulfate sulfurtransferase GlpE.